The sequence spans 430 residues: Argininosuccinate lyase (430 aa).

It belongs to the lyase 1 family. Argininosuccinate lyase subfamily.

It is found in the cytoplasm. It catalyses the reaction 2-(N(omega)-L-arginino)succinate = fumarate + L-arginine. Its pathway is amino-acid biosynthesis; L-arginine biosynthesis; L-arginine from L-ornithine and carbamoyl phosphate: step 3/3. In Sorangium cellulosum (strain So ce56) (Polyangium cellulosum (strain So ce56)), this protein is Argininosuccinate lyase.